The primary structure comprises 203 residues: Outer-membrane lipoprotein carrier protein (203 aa).

Residues 1 to 21 (MKKMAIACALLSSVVASSVWA) form the signal peptide. Residues 178-203 (QQNGAVDPSKFTFTPPQGVTIDDQRK) are disordered.

It belongs to the LolA family. Monomer.

Its subcellular location is the periplasm. Its function is as follows. Participates in the translocation of lipoproteins from the inner membrane to the outer membrane. Only forms a complex with a lipoprotein if the residue after the N-terminal Cys is not an aspartate (The Asp acts as a targeting signal to indicate that the lipoprotein should stay in the inner membrane). The polypeptide is Outer-membrane lipoprotein carrier protein (Salmonella agona (strain SL483)).